The following is a 150-amino-acid chain: Large ribosomal subunit protein uL13 (150 aa).

Positions P129 to Q150 are disordered. The segment covering Q136–Q150 has biased composition (polar residues).

Belongs to the universal ribosomal protein uL13 family. Part of the 50S ribosomal subunit.

Its function is as follows. This protein is one of the early assembly proteins of the 50S ribosomal subunit, although it is not seen to bind rRNA by itself. It is important during the early stages of 50S assembly. In Prochlorococcus marinus (strain MIT 9303), this protein is Large ribosomal subunit protein uL13.